Consider the following 282-residue polypeptide: Bifunctional protein FolD (282 aa).

Residues 164-166 (GRS) and Ser189 contribute to the NADP(+) site.

It belongs to the tetrahydrofolate dehydrogenase/cyclohydrolase family. As to quaternary structure, homodimer.

The catalysed reaction is (6R)-5,10-methylene-5,6,7,8-tetrahydrofolate + NADP(+) = (6R)-5,10-methenyltetrahydrofolate + NADPH. The enzyme catalyses (6R)-5,10-methenyltetrahydrofolate + H2O = (6R)-10-formyltetrahydrofolate + H(+). The protein operates within one-carbon metabolism; tetrahydrofolate interconversion. Its function is as follows. Catalyzes the oxidation of 5,10-methylenetetrahydrofolate to 5,10-methenyltetrahydrofolate and then the hydrolysis of 5,10-methenyltetrahydrofolate to 10-formyltetrahydrofolate. The chain is Bifunctional protein FolD from Lactobacillus helveticus (strain DPC 4571).